A 273-amino-acid polypeptide reads, in one-letter code: Homeobox protein HMX2 (273 aa).

Residues 1-152 (MGSKEDAGKG…RQAGAAKKKT (152 aa)) are disordered. Gly residues predominate over residues 93–102 (KGSGGSGPGG). A compositionally biased stretch (basic and acidic residues) spans 114-123 (SDFKEEKERL). A DNA-binding region (homeobox) is located at residues 149–208 (KKKTRTVFSRSQVYQLESTFDMKRYLSSSERACLASSLQLTETQVKTWFQNRRNKWKRQL).

Belongs to the HMX homeobox family.

It is found in the nucleus. Transcription factor involved in specification of neuronal cell types and which is required for inner ear and hypothalamus development. The polypeptide is Homeobox protein HMX2 (HMX2) (Homo sapiens (Human)).